The chain runs to 71 residues: uncharacterized protein (71 aa).

This is an uncharacterized protein from Homo sapiens (Human).